The chain runs to 157 residues: Protein-export protein SecB (157 aa).

It belongs to the SecB family. In terms of assembly, homotetramer, a dimer of dimers. One homotetramer interacts with 1 SecA dimer.

The protein resides in the cytoplasm. In terms of biological role, one of the proteins required for the normal export of preproteins out of the cell cytoplasm. It is a molecular chaperone that binds to a subset of precursor proteins, maintaining them in a translocation-competent state. It also specifically binds to its receptor SecA. The sequence is that of Protein-export protein SecB from Methylobacillus flagellatus (strain ATCC 51484 / DSM 6875 / VKM B-1610 / KT).